The chain runs to 632 residues: MAU2 chromatid cohesion factor homolog (632 aa).

TPR repeat units follow at residues 453–486 (GGFY…ANAE) and 493–526 (SCSL…ASKI).

Belongs to the SCC4/mau-2 family. Interacts with Nipped-B to form the cohesin loading complex.

Its subcellular location is the nucleus. The protein resides in the nucleoplasm. Functionally, required for association of the cohesin complex with chromatin during interphase. Plays a role in sister chromatid cohesion and normal progression through prometaphase. In Drosophila sechellia (Fruit fly), this protein is MAU2 chromatid cohesion factor homolog.